The chain runs to 173 residues: Acireductone dioxygenase 1 (173 aa).

4 residues coordinate Fe(2+): His96, His98, Glu102, and His140. The Ni(2+) site is built by His96, His98, Glu102, and His140.

This sequence belongs to the acireductone dioxygenase (ARD) family. In terms of assembly, monomer. Fe(2+) serves as cofactor. The cofactor is Ni(2+).

It catalyses the reaction 1,2-dihydroxy-5-(methylsulfanyl)pent-1-en-3-one + O2 = 3-(methylsulfanyl)propanoate + CO + formate + 2 H(+). The catalysed reaction is 1,2-dihydroxy-5-(methylsulfanyl)pent-1-en-3-one + O2 = 4-methylsulfanyl-2-oxobutanoate + formate + 2 H(+). It participates in amino-acid biosynthesis; L-methionine biosynthesis via salvage pathway; L-methionine from S-methyl-5-thio-alpha-D-ribose 1-phosphate: step 5/6. Catalyzes 2 different reactions between oxygen and the acireductone 1,2-dihydroxy-3-keto-5-methylthiopentene (DHK-MTPene) depending upon the metal bound in the active site. Fe-containing acireductone dioxygenase (Fe-ARD) produces formate and 2-keto-4-methylthiobutyrate (KMTB), the alpha-ketoacid precursor of methionine in the methionine recycle pathway. Ni-containing acireductone dioxygenase (Ni-ARD) produces methylthiopropionate, carbon monoxide and formate, and does not lie on the methionine recycle pathway. The chain is Acireductone dioxygenase 1 from Pectobacterium atrosepticum (strain SCRI 1043 / ATCC BAA-672) (Erwinia carotovora subsp. atroseptica).